Consider the following 407-residue polypeptide: Methylthioribose-1-phosphate isomerase (407 aa).

Asp-275 functions as the Proton donor in the catalytic mechanism.

It belongs to the eIF-2B alpha/beta/delta subunits family. MtnA subfamily.

The protein localises to the cytoplasm. Its subcellular location is the nucleus. The enzyme catalyses 5-(methylsulfanyl)-alpha-D-ribose 1-phosphate = 5-(methylsulfanyl)-D-ribulose 1-phosphate. It functions in the pathway amino-acid biosynthesis; L-methionine biosynthesis via salvage pathway; L-methionine from S-methyl-5-thio-alpha-D-ribose 1-phosphate: step 1/6. Functionally, catalyzes the interconversion of methylthioribose-1-phosphate (MTR-1-P) into methylthioribulose-1-phosphate (MTRu-1-P). This is Methylthioribose-1-phosphate isomerase from Kluyveromyces lactis (strain ATCC 8585 / CBS 2359 / DSM 70799 / NBRC 1267 / NRRL Y-1140 / WM37) (Yeast).